The chain runs to 403 residues: MKEHIAVDRNTYDQVMLPIYSPAQFIPVRGQGSRVWDQHGKEYIDFAGGIAVVALGHCHPTLVDVLKQQGEKLWHISNIFTNEPALILAQKLIDATFAERVFFANSGAEANEAAFKLARHYAIARHNPYKTKIIAFHQGFHGRTLFTVSVGGQPKYADGFGPKPADIIHVPFNDLDAVKAVIDDHTCAVVLEPVQGEGGVTAAAPAFIHGVRELCDKHQVLLVFDEVQSGMGRTGKLFSYMHYDVTPDIITTAKALGNGFPISAMLTTVNIASVMTPGAHGTTYGGNPLACAVANVAFDIINTPAVLAGVEKRHNLMVNFLNDINQKYSIFGEIRGKGLLIGAELKAPHQGKAKDILQLAAENGLMLLSAGGDVLRFTPSLIISEEEIAQGMERLEQVINQLV.

Pyridoxal 5'-phosphate contacts are provided by residues 107-108 and F140; that span reads GA. R143 contacts N(2)-acetyl-L-ornithine. Position 225–228 (225–228) interacts with pyridoxal 5'-phosphate; the sequence is DEVQ. N6-(pyridoxal phosphate)lysine is present on K254. T282 lines the N(2)-acetyl-L-ornithine pocket. T283 serves as a coordination point for pyridoxal 5'-phosphate.

The protein belongs to the class-III pyridoxal-phosphate-dependent aminotransferase family. ArgD subfamily. As to quaternary structure, homodimer. Pyridoxal 5'-phosphate is required as a cofactor.

The protein localises to the cytoplasm. It carries out the reaction N(2)-acetyl-L-ornithine + 2-oxoglutarate = N-acetyl-L-glutamate 5-semialdehyde + L-glutamate. It catalyses the reaction N-succinyl-(2S,6S)-2,6-diaminopimelate + 2-oxoglutarate = (S)-2-succinylamino-6-oxoheptanedioate + L-glutamate. The protein operates within amino-acid biosynthesis; L-arginine biosynthesis; N(2)-acetyl-L-ornithine from L-glutamate: step 4/4. It functions in the pathway amino-acid biosynthesis; L-lysine biosynthesis via DAP pathway; LL-2,6-diaminopimelate from (S)-tetrahydrodipicolinate (succinylase route): step 2/3. Its function is as follows. Involved in both the arginine and lysine biosynthetic pathways. In Photorhabdus laumondii subsp. laumondii (strain DSM 15139 / CIP 105565 / TT01) (Photorhabdus luminescens subsp. laumondii), this protein is Acetylornithine/succinyldiaminopimelate aminotransferase.